Reading from the N-terminus, the 250-residue chain is Maleate isomerase (250 aa).

Substrate is bound by residues N15, 80-82, Y137, and N167; that span reads CLV. C80 acts as the Nucleophile in catalysis. C80 carries the post-translational modification S-(2-succinyl)cysteine. Residue C198 is the Proton donor of the active site. 199 to 200 contacts substrate; the sequence is VQ.

It belongs to the maleate isomerase family. Homodimer.

It catalyses the reaction maleate = fumarate. It functions in the pathway cofactor degradation; nicotinate degradation. In terms of biological role, catalyzes cis-trans isomerization of the C2-C3 double bond in maleate to yield fumarate in the aerobic nicotinate degradation pathway. The polypeptide is Maleate isomerase (Pseudomonas putida (strain ATCC 47054 / DSM 6125 / CFBP 8728 / NCIMB 11950 / KT2440)).